The chain runs to 485 residues: MNESVTIRGKDRYKSGVMEYKKMGYWEPDYEPKDTDIIALFRVTPQDGVDPTEASAAVAGESSTATWTVVWTDRLTAAEKYRAKCYRVDPVPNSPGQFFAYIAYDLDLFENGSIANLSASIIGNVFGFKPLKALRLEDMRLPVAYVKTFQGPATGIVVERERMDKFGRPLLGATVKPKLGLSGRNYGRVVYEALKGGLDFTKDDENINSQPFMHWRERFLYCMEAVNKAQAASGEIKGTYLNVTAGTMEEMYERAEFAKQLGSVIIMIDLVIGYTAIQSMAKWARRNDMILHLHRAGHSTYTRQRNHGVSFRVIAKWMRLAGVDHIHAGTVVGKLEGDPATTKGYYDICREDYNPMQLEHGIFFEQNWASLNKLMPVASGGIHAGQMHQLLDHLGEDVVLQFGGGTIGHPMGIQAGATANRVALEAMIMARNEGRDYLHEGEEILAKAALTCTPLKAALETWKNVTFNYESTDMPDYAPTPSVSM.

Substrate-binding residues include N124 and T174. The Proton acceptor role is filled by K176. K178 serves as a coordination point for substrate. Residues K202, D204, and E205 each contribute to the Mg(2+) site. K202 is subject to N6-carboxylysine. H294 serves as the catalytic Proton acceptor. Substrate-binding residues include R295, H327, and S379.

This sequence belongs to the RuBisCO large chain family. Type I subfamily. In terms of assembly, heterohexadecamer of 8 large chains and 8 small chains. The cofactor is Mg(2+).

The catalysed reaction is 2 (2R)-3-phosphoglycerate + 2 H(+) = D-ribulose 1,5-bisphosphate + CO2 + H2O. The enzyme catalyses D-ribulose 1,5-bisphosphate + O2 = 2-phosphoglycolate + (2R)-3-phosphoglycerate + 2 H(+). In terms of biological role, ruBisCO catalyzes two reactions: the carboxylation of D-ribulose 1,5-bisphosphate, the primary event in carbon dioxide fixation, as well as the oxidative fragmentation of the pentose substrate in the photorespiration process. Both reactions occur simultaneously and in competition at the same active site. This is Ribulose bisphosphate carboxylase large chain from Rhodopseudomonas palustris (strain BisB18).